Reading from the N-terminus, the 165-residue chain is Basic transcription factor 3 (165 aa).

The NAC-A/B domain maps to 33–97 (TTDDKRLQST…PQTKKLQDIL (65 aa)). Polar residues predominate over residues 120–134 (QKQASGEGNAASATI). The segment at 120–144 (QKQASGEGNAASATIQEEDDDDVPE) is disordered.

It belongs to the NAC-beta family. Part of the nascent polypeptide-associated complex (NAC). Interacts with EIF(ISO)4E.

This chain is Basic transcription factor 3, found in Arabidopsis thaliana (Mouse-ear cress).